A 638-amino-acid chain; its full sequence is Golgin subfamily A member 8S (638 aa).

Residues 1-11 (MWPQARLPPHP) are compositionally biased toward pro residues. The tract at residues 1-84 (MWPQARLPPH…GESPTSSATL (84 aa)) is disordered. Residues 50 to 62 (TNGSIHETATSGG) show a composition bias toward polar residues. Coiled coils occupy residues 105 to 160 (VSQL…LNTD), 223 to 275 (LEQS…MSQE), and 318 to 417 (EAEL…QQKQ). 3 disordered regions span residues 427-453 (ALPG…PSIP), 510-532 (KDAA…DEAA), and 556-575 (AHNP…ELGA). Positions 434 to 446 (GGGHLDSEGEEAP) are enriched in basic and acidic residues. A compositionally biased stretch (gly residues) spans 514 to 525 (LGGGHHQAGAQG). Residues 561–574 (DEPGPGAPAPQELG) show a composition bias toward low complexity.

This sequence belongs to the GOLGA8 family.

The sequence is that of Golgin subfamily A member 8S from Homo sapiens (Human).